The chain runs to 602 residues: Sulfite reductase [NADPH] hemoprotein beta-component (602 aa).

Residues 1-23 (MDDTKTASPAPARAYETPPAERP) form a disordered region. Residues Cys458, Cys464, Cys503, and Cys507 each coordinate [4Fe-4S] cluster. Cys507 provides a ligand contact to siroheme.

This sequence belongs to the nitrite and sulfite reductase 4Fe-4S domain family. Alpha(8)-beta(8). The alpha component is a flavoprotein, the beta component is a hemoprotein. It depends on siroheme as a cofactor. The cofactor is [4Fe-4S] cluster.

The enzyme catalyses hydrogen sulfide + 3 NADP(+) + 3 H2O = sulfite + 3 NADPH + 4 H(+). It functions in the pathway sulfur metabolism; hydrogen sulfide biosynthesis; hydrogen sulfide from sulfite (NADPH route): step 1/1. Functionally, component of the sulfite reductase complex that catalyzes the 6-electron reduction of sulfite to sulfide. This is one of several activities required for the biosynthesis of L-cysteine from sulfate. This Methylobacterium sp. (strain 4-46) protein is Sulfite reductase [NADPH] hemoprotein beta-component.